Consider the following 123-residue polypeptide: Small ribosomal subunit protein uS12cz/uS12cy (123 aa).

This sequence belongs to the universal ribosomal protein uS12 family. In terms of assembly, part of the 30S ribosomal subunit.

It localises to the plastid. The protein resides in the chloroplast. Functionally, with S4 and S5 plays an important role in translational accuracy. Located at the interface of the 30S and 50S subunits. This is Small ribosomal subunit protein uS12cz/uS12cy (rps12-A) from Eucalyptus globulus subsp. globulus (Tasmanian blue gum).